The sequence spans 145 residues: Ribosome-binding factor A (145 aa).

The interval 126-145 (RDLDTETDAEAGSETTKEED) is disordered. Positions 130–145 (TETDAEAGSETTKEED) are enriched in acidic residues.

It belongs to the RbfA family. Monomer. Binds 30S ribosomal subunits, but not 50S ribosomal subunits or 70S ribosomes.

It is found in the cytoplasm. In terms of biological role, one of several proteins that assist in the late maturation steps of the functional core of the 30S ribosomal subunit. Associates with free 30S ribosomal subunits (but not with 30S subunits that are part of 70S ribosomes or polysomes). Required for efficient processing of 16S rRNA. May interact with the 5'-terminal helix region of 16S rRNA. The protein is Ribosome-binding factor A of Azorhizobium caulinodans (strain ATCC 43989 / DSM 5975 / JCM 20966 / LMG 6465 / NBRC 14845 / NCIMB 13405 / ORS 571).